A 345-amino-acid polypeptide reads, in one-letter code: Adenine deaminase (345 aa).

Zn(2+)-binding residues include His20, His22, and His204. The Proton donor role is filled by Glu207. Residue Asp285 coordinates Zn(2+). Asp286 is a binding site for substrate.

Belongs to the metallo-dependent hydrolases superfamily. Adenosine and AMP deaminases family. Adenine deaminase type 2 subfamily. It depends on Zn(2+) as a cofactor.

The enzyme catalyses adenine + H2O + H(+) = hypoxanthine + NH4(+). Functionally, catalyzes the hydrolytic deamination of adenine to hypoxanthine. Plays an important role in the purine salvage pathway and in nitrogen catabolism. The sequence is that of Adenine deaminase from Ralstonia pickettii (strain 12J).